A 149-amino-acid polypeptide reads, in one-letter code: Calmodulin-2 (149 aa).

Alanine 2 bears the N-acetylalanine mark. EF-hand domains are found at residues 8–43 (EQIAEFKEAFSLFDKDGDGTITTKELGTVMRSLGQN), 44–79 (PTEAELQDMINEVDADGNGTIDFPEFLTMMARKMKD), 81–116 (DSEEEIREAFRVFDKDGNGFISAAELRHVMTNLGEK), and 117–149 (LTDEEVDEMVREADIDGDGQVNYEEFVEMMTSK). 14 residues coordinate Ca(2+): aspartate 21, aspartate 23, aspartate 25, threonine 27, glutamate 32, aspartate 57, aspartate 59, asparagine 61, threonine 63, glutamate 68, aspartate 94, aspartate 96, asparagine 98, and glutamate 105. Lysine 116 carries the N6,N6,N6-trimethyllysine modification. Aspartate 130, aspartate 132, aspartate 134, glutamine 136, and glutamate 141 together coordinate Ca(2+).

It belongs to the calmodulin family.

Functionally, calmodulin mediates the control of a large number of enzymes, ion channels and other proteins by Ca(2+). Among the enzymes to be stimulated by the calmodulin-Ca(2+) complex are a number of protein kinases and phosphatases. In Branchiostoma lanceolatum (Common lancelet), this protein is Calmodulin-2 (CAM2).